Here is a 447-residue protein sequence, read N- to C-terminus: UDP-glycosyltransferase 76E3 (447 aa).

Residues Ser-269, 328–330, 345–353, and 367–370 contribute to the UDP-alpha-D-glucose site; these read APQ, HCGWNSTLE, and QGEQ.

It belongs to the UDP-glycosyltransferase family.

This is UDP-glycosyltransferase 76E3 (UGT76E3) from Arabidopsis thaliana (Mouse-ear cress).